Consider the following 75-residue polypeptide: Salivary glue protein Sgs-8 (75 aa).

An N-terminal signal peptide occupies residues 1–24 (MKLLVVAVIACIMLIGFADPASGC).

This Drosophila melanogaster (Fruit fly) protein is Salivary glue protein Sgs-8 (Sgs8).